The primary structure comprises 448 residues: GTPase Der (448 aa).

2 EngA-type G domains span residues 3–167 (PVIA…EPPE) and 182–355 (TRLA…ASAT). Residues 9–16 (GRPNVGKS), 56–60 (DTGGF), 119–122 (NKAE), 188–195 (GRPNVGKS), 235–239 (DTAGL), and 300–303 (NKWD) contribute to the GTP site. The KH-like domain occupies 356–440 (RKLPTPQLTR…PMRIELRASH (85 aa)).

The protein belongs to the TRAFAC class TrmE-Era-EngA-EngB-Septin-like GTPase superfamily. EngA (Der) GTPase family. In terms of assembly, associates with the 50S ribosomal subunit.

Functionally, GTPase that plays an essential role in the late steps of ribosome biogenesis. This chain is GTPase Der, found in Leptothrix cholodnii (strain ATCC 51168 / LMG 8142 / SP-6) (Leptothrix discophora (strain SP-6)).